Consider the following 140-residue polypeptide: 3-hydroxyacyl-[acyl-carrier-protein] dehydratase FabZ (140 aa).

His47 is a catalytic residue.

It belongs to the thioester dehydratase family. FabZ subfamily.

The protein localises to the cytoplasm. The catalysed reaction is a (3R)-hydroxyacyl-[ACP] = a (2E)-enoyl-[ACP] + H2O. In terms of biological role, involved in unsaturated fatty acids biosynthesis. Catalyzes the dehydration of short chain beta-hydroxyacyl-ACPs and long chain saturated and unsaturated beta-hydroxyacyl-ACPs. The polypeptide is 3-hydroxyacyl-[acyl-carrier-protein] dehydratase FabZ (Streptococcus mutans serotype c (strain ATCC 700610 / UA159)).